Here is a 200-residue protein sequence, read N- to C-terminus: COMM domain-containing protein 7 (200 aa).

Positions 133-200 (QLVDMEWKFG…RVRTSMECFS (68 aa)) constitute a COMM domain.

This sequence belongs to the COMM domain-containing protein 7 family. As to quaternary structure, component of the commander complex consisting of the CCC subcomplex and the retriever subcomplex. Component of the CCC (COMMD/CCDC22/CCDC93) subcomplex consisting of COMMD1, COMMD2, COMMD3, COMMD4, COMMD5, COMMD6, COMMD7, COMMD8, COMMD9, COMMD10, CCDC22 and CCDC93; within the complex forms a heterodimer with COMMD9. Interacts with RELA. Interacts with CCDC22, CCDC93, SCNN1B, CUL7.

The protein resides in the cytoplasmic vesicle. Scaffold protein in the commander complex that is essential for endosomal recycling of transmembrane cargos; the commander complex is composed of the CCC subcomplex and the retriever subcomplex. May modulate activity of cullin-RING E3 ubiquitin ligase (CRL) complexes. Associates with the NF-kappa-B complex and suppresses its transcriptional activity. This chain is COMM domain-containing protein 7 (COMMD7), found in Bos taurus (Bovine).